An 805-amino-acid polypeptide reads, in one-letter code: MRYEFSAIEKKWQAIWQENGTFKTGESTEKPKYYVLDMFPYPSGSGLHVGHLEGYTASDIIARFKRSRGFNVLHPMGWDAFGLPAEQYAIKTGTHPKITTENNIRSFRETLQAMGFSYDWSKEINTTDPAYFKWTQWIFLRLYEMGLAYMSDVDVNWCEELKTVLANEEVDEKIADGYTVVRKPLRQWVLKITAYAERLLADLDELEWPENVKQMQRNWIGRSEGVEIDFELRCHGKNLRVYTTRPDTLFGATYLVVSPEHPLAEKLATADNLKEVKAYISRAKLKTELERTGLQKDKTGVFTGSYAINPATGNPLPVWISDFVLISYGTGAIMSVPAHDSRDWEFAKKFDLPIIEVIKSPHDVNDAVFEGKESVPVNSSNSEITIDGLPFREAFDTMASWLEKKGAGKRTINYKLRDWIFSRQRYWGEPIPIKHYEDGTLRTETILPLTLPDVEAYQPSETGESPLATIHDWLYGSDEFGSFRRETNTMPQWAGSCWYYLRFIDPENSGRLIDPEREKYWMNVDLYIGGAEHAVLHLLYARFWHKVLFDLNVVSTVEPFRKLFNQGMILGEDNEKMSKSRGNVIPADHVLKTYGADAVRLYEMFLGPLEQVKPWNTNGIEGISRFLGKVWRLVYPEQEGNKAELTDETMPEELLRRLHKTIRKVTEDTEALKFNTAIAEMMVLVNELQRNGCRNRTAVESMILLLAPYAPHIAEELWQATGHTGSISNEPFPNYVAGLATDSVVQIAVQVNGKLRGTFSTPAGTPQNSLIETARNVESVMKFLEGKAIMREIVVPDKLVNFAVK.

The 'HIGH' region motif lies at 40-51 (PYPSGSGLHVGH). Positions 576–580 (KMSKS) match the 'KMSKS' region motif. K579 contributes to the ATP binding site.

The protein belongs to the class-I aminoacyl-tRNA synthetase family.

The protein resides in the cytoplasm. The enzyme catalyses tRNA(Leu) + L-leucine + ATP = L-leucyl-tRNA(Leu) + AMP + diphosphate. The sequence is that of Leucine--tRNA ligase from Chlorobium limicola (strain DSM 245 / NBRC 103803 / 6330).